A 441-amino-acid polypeptide reads, in one-letter code: Platelet-activating factor acetylhydrolase (441 aa).

The signal sequence occupies residues 1–21 (MVPPKLHVLFCLCGCLAVVYP). Ser273 serves as the catalytic Nucleophile. Active-site charge relay system residues include Asp296 and His351. N-linked (GlcNAc...) asparagine glycosylation is found at Asn423 and Asn433.

Belongs to the AB hydrolase superfamily. Lipase family. In terms of processing, N-glycosylated. Macrophage-derived PLA2G7 carries sialylated complex-type N-glycans that hinder its binding to HDL particles. As to expression, plasma. Secreted by macrophages (at protein level).

It is found in the secreted. It localises to the extracellular space. The catalysed reaction is a 1-O-alkyl-2-acetyl-sn-glycero-3-phosphocholine + H2O = a 1-O-alkyl-sn-glycero-3-phosphocholine + acetate + H(+). The enzyme catalyses 1-O-decyl-2-acetyl-sn-glycero-3-phosphocholine + H2O = 1-O-decyl-sn-glycero-3-phosphocholine + acetate + H(+). It catalyses the reaction 1-O-dodecyl-2-acetyl-sn-glycero-3-phosphocholine + H2O = 1-O-dodecyl-sn-glycero-3-phosphocholine + acetate + H(+). It carries out the reaction 1-O-tetradecyl-2-acetyl-sn-glycero-3-phosphocholine + H2O = 1-O-tetradecyl-sn-glycero-3-phosphocholine + acetate + H(+). The catalysed reaction is 1-O-hexadecyl-2-acetyl-sn-glycero-3-phosphocholine + H2O = 1-O-hexadecyl-sn-glycero-3-phosphocholine + acetate + H(+). The enzyme catalyses 1-O-octadecyl-2-acetyl-sn-glycero-3-phosphocholine + H2O = 1-O-octadecyl-sn-glycero-3-phosphocholine + acetate + H(+). It catalyses the reaction 1-hexadecanoyl-2-acetyl-sn-glycero-3-phosphocholine + H2O = 1-hexadecanoyl-sn-glycero-3-phosphocholine + acetate + H(+). It carries out the reaction 1-hexadecanoyl-2-propionyl-sn-glycero-3-phosphocholine + H2O = propanoate + 1-hexadecanoyl-sn-glycero-3-phosphocholine + H(+). The catalysed reaction is 1-hexadecanoyl-2-butanoyl-sn-glycero-3-phosphocholine + H2O = butanoate + 1-hexadecanoyl-sn-glycero-3-phosphocholine + H(+). The enzyme catalyses 1-hexadecanoyl-2-pentanoyl-sn-glycero-3-phosphocholine + H2O = pentanoate + 1-hexadecanoyl-sn-glycero-3-phosphocholine + H(+). It catalyses the reaction 1-hexadecanoyl-2-glutaroyl-sn-glycero-3-phosphocholine + H2O = glutarate + 1-hexadecanoyl-sn-glycero-3-phosphocholine + H(+). It carries out the reaction 1-hexadecanoyl-2-(5-oxopentanoyl)-sn-glycero-3-phosphocholine + H2O = 5-oxopentanoate + 1-hexadecanoyl-sn-glycero-3-phosphocholine + H(+). The catalysed reaction is 1-hexadecanoyl-2-(9-oxononanoyl)-sn-glycero-3-phosphocholine + H2O = 9-oxononanoate + 1-hexadecanoyl-sn-glycero-3-phosphocholine + H(+). The enzyme catalyses 1-hexadecanoyl-2-[9-hydroperoxy-(10E-octadecenoyl)]-sn-glycero-3-phosphocholine + H2O = 9-hydroperoxy-10E-octadecenoate + 1-hexadecanoyl-sn-glycero-3-phosphocholine + H(+). It catalyses the reaction 1-hexadecanoyl-2-(10-hydroperoxy-8E-octadecenoyl)-sn-glycero-3-phosphocholine + H2O = 10-hydroperoxy-(8E)-octadecenoate + 1-hexadecanoyl-sn-glycero-3-phosphocholine + H(+). Its function is as follows. Lipoprotein-associated calcium-independent phospholipase A2 involved in phospholipid catabolism during inflammatory and oxidative stress response. At the lipid-aqueous interface, hydrolyzes the ester bond of fatty acyl group attached at sn-2 position of phospholipids (phospholipase A2 activity). Specifically targets phospholipids with a short-chain fatty acyl group at sn-2 position. Can hydrolyze phospholipids with long fatty acyl chains, only if they carry oxidized functional groups. Hydrolyzes and inactivates platelet-activating factor (PAF, 1-O-alkyl-2-acetyl-sn-glycero-3-phosphocholine), a potent pro-inflammatory signaling lipid that acts through PTAFR on various innate immune cells. Hydrolyzes oxidatively truncated phospholipids carrying an aldehyde group at omega position, preventing their accumulation in low-density lipoprotein (LDL) particles and uncontrolled pro-inflammatory effects. As part of high-density lipoprotein (HDL) particles, can hydrolyze phospholipids having long-chain fatty acyl hydroperoxides at sn-2 position and protect against potential accumulation of these oxylipins in the vascular wall. Catalyzes the release from membrane phospholipids of F2-isoprostanes, lipid biomarkers of cellular oxidative damage. The protein is Platelet-activating factor acetylhydrolase (PLA2G7) of Homo sapiens (Human).